We begin with the raw amino-acid sequence, 420 residues long: Transcription factor TCP4 (420 aa).

Positions 1–27 (MSDDQFHHPPPPSSMRHRSTSDAADGG) are disordered. The TCP domain maps to 45 to 103 (RKDRHSKVCTAKGPRDRRVRLSAHTAIQFYDVQDRLGFDRPSKAVDWLIKKAKTSIDEL). Disordered stretches follow at residues 121-176 (NAKP…PSMD), 228-256 (LSLQ…ASEP), 353-379 (HQSI…IPGI), and 399-420 (QEEE…ISRH). Residues 410 to 420 (KPSSASSISRH) show a composition bias toward polar residues.

Interacts with AHL27 and AHL29. Interacts with SPL. Interacts with JGB. Interacts with GI (via N-terminus). As to expression, expressed in cotyledons, particularly in the vascular region, in leaves, roots, buds, flowers and immature siliques.

It localises to the nucleus. Functionally, transcription factor playing a pivotal role in the control of morphogenesis of shoot organs by negatively regulating the expression of boundary-specific genes such as CUC genes, probably through the induction of miRNA (e.g. miR164). Required during early steps of embryogenesis. Participates in ovule development. Activates LOX2 expression by binding to the 5'-GGACCA-3' motif found in its promoter. Activates YUC5 transcription by binding to the 5'-GTGGGCCA-3' motif found in its promoter. Through the activation of YUC5 transcription, integrates the auxin response to a brassinosteroid-dependent molecular circuit that promotes cell elongation in hypocotyls. Activates GIS transcription by binding to the 5'-TGGTCC-3' motif found in its promoter. Involved in the regulation of trichome branching through the activation of GIS transcription. Activates CO transcription by binding to the 5'-GGACCAC-3' motif found in its promoter. Involved in the regulation of photoperiodic flowering through the activation of CO transcription. Activates TCL1 and TCL2 transcription by binding to the 5'-TGGCCA-3' and 5'-GTGGACCA-3' motifS found in their respective promoters. Involved in the suppression of trichome initiaition through the activation of TCL1 and TCL2 transcription. Activates HAT2 transcription by binding to the 5'-TGGTCCAC-3' motif found in its promoter. Through the activation of HAT2 transcription, involved in the auxin-independent reprogramming of mitotic cells to exit division and acquire differentiation competence within the transition zone. This is Transcription factor TCP4 (TCP4) from Arabidopsis thaliana (Mouse-ear cress).